Here is a 65-residue protein sequence, read N- to C-terminus: Large ribosomal subunit protein uL29 (65 aa).

It belongs to the universal ribosomal protein uL29 family.

The polypeptide is Large ribosomal subunit protein uL29 (Leptothrix cholodnii (strain ATCC 51168 / LMG 8142 / SP-6) (Leptothrix discophora (strain SP-6))).